An 88-amino-acid chain; its full sequence is RNA-binding protein Hfq (88 aa).

A Sm domain is found at 9 to 68 (DPYLNVLRKERVPVSIYLVNGIKLQGQVESFDQFVVLLKNTVSQMVYKHAISTVVPSRAV).

Belongs to the Hfq family. As to quaternary structure, homohexamer.

Functionally, RNA chaperone that binds small regulatory RNA (sRNAs) and mRNAs to facilitate mRNA translational regulation in response to envelope stress, environmental stress and changes in metabolite concentrations. Also binds with high specificity to tRNAs. The chain is RNA-binding protein Hfq from Cellvibrio japonicus (strain Ueda107) (Pseudomonas fluorescens subsp. cellulosa).